Here is a 92-residue protein sequence, read N- to C-terminus: Small ribosomal subunit protein uS19 (92 aa).

It belongs to the universal ribosomal protein uS19 family.

Functionally, protein S19 forms a complex with S13 that binds strongly to the 16S ribosomal RNA. The chain is Small ribosomal subunit protein uS19 from Desulfosudis oleivorans (strain DSM 6200 / JCM 39069 / Hxd3) (Desulfococcus oleovorans).